Here is a 436-residue protein sequence, read N- to C-terminus: 3-hydroxy-3-methylglutaryl-coenzyme A reductase (436 aa).

Active-site charge relay system residues include Glu-99, Lys-277, and Asp-293. His-390 serves as the catalytic Proton donor.

Belongs to the HMG-CoA reductase family.

The enzyme catalyses (R)-mevalonate + 2 NADP(+) + CoA = (3S)-3-hydroxy-3-methylglutaryl-CoA + 2 NADPH + 2 H(+). Its pathway is metabolic intermediate biosynthesis; (R)-mevalonate biosynthesis; (R)-mevalonate from acetyl-CoA: step 3/3. Its function is as follows. Converts HMG-CoA to mevalonate. This Archaeoglobus fulgidus (strain ATCC 49558 / DSM 4304 / JCM 9628 / NBRC 100126 / VC-16) protein is 3-hydroxy-3-methylglutaryl-coenzyme A reductase (hmgA).